The primary structure comprises 165 residues: MSGEGRPQASVPQAGELRLGIAAIRWHAKITDRLLERALAAASEAGVAEPTVVRVPGSIELPVVCQQLAHQHDAVVALGVVIRGGTPHFEYVCDSVTAGLTRVSLDESTPVGNGVLTCDTEEQALARAGFEDSAEDKGFEATAAALETALVLRELRGFENGRGFL.

5-amino-6-(D-ribitylamino)uracil contacts are provided by residues tryptophan 26, 58–60 (SIE), and 80–82 (VVI). Position 85-86 (85-86 (GT)) interacts with (2S)-2-hydroxy-3-oxobutyl phosphate. Catalysis depends on histidine 88, which acts as the Proton donor. Residue asparagine 113 participates in 5-amino-6-(D-ribitylamino)uracil binding. Residue arginine 127 participates in (2S)-2-hydroxy-3-oxobutyl phosphate binding.

It belongs to the DMRL synthase family.

The catalysed reaction is (2S)-2-hydroxy-3-oxobutyl phosphate + 5-amino-6-(D-ribitylamino)uracil = 6,7-dimethyl-8-(1-D-ribityl)lumazine + phosphate + 2 H2O + H(+). It functions in the pathway cofactor biosynthesis; riboflavin biosynthesis; riboflavin from 2-hydroxy-3-oxobutyl phosphate and 5-amino-6-(D-ribitylamino)uracil: step 1/2. Its function is as follows. Catalyzes the formation of 6,7-dimethyl-8-ribityllumazine by condensation of 5-amino-6-(D-ribitylamino)uracil with 3,4-dihydroxy-2-butanone 4-phosphate. This is the penultimate step in the biosynthesis of riboflavin. The sequence is that of 6,7-dimethyl-8-ribityllumazine synthase from Saccharopolyspora erythraea (strain ATCC 11635 / DSM 40517 / JCM 4748 / NBRC 13426 / NCIMB 8594 / NRRL 2338).